The following is a 377-amino-acid chain: UPF0754 membrane protein RBAM_010020 (377 aa).

A run of 2 helical transmembrane segments spans residues 1–21 (MGIA…GAVT) and 357–377 (YLGG…VILF).

This sequence belongs to the UPF0754 family.

Its subcellular location is the cell membrane. The sequence is that of UPF0754 membrane protein RBAM_010020 from Bacillus velezensis (strain DSM 23117 / BGSC 10A6 / LMG 26770 / FZB42) (Bacillus amyloliquefaciens subsp. plantarum).